A 628-amino-acid chain; its full sequence is UvrABC system protein C (628 aa).

The GIY-YIG domain maps to 20–99; sequence TSAGVYLMRD…IKTHKPRYNV (80 aa). The UVR domain occupies 209–244; the sequence is AELLAQLEDQMQTAAAAMNFEHAARLRDRITGLNQL.

This sequence belongs to the UvrC family. In terms of assembly, interacts with UvrB in an incision complex.

It localises to the cytoplasm. In terms of biological role, the UvrABC repair system catalyzes the recognition and processing of DNA lesions. UvrC both incises the 5' and 3' sides of the lesion. The N-terminal half is responsible for the 3' incision and the C-terminal half is responsible for the 5' incision. In Gloeobacter violaceus (strain ATCC 29082 / PCC 7421), this protein is UvrABC system protein C.